Reading from the N-terminus, the 118-residue chain is Large ribosomal subunit protein uL18 (118 aa).

Residues methionine 1 to alanine 26 are disordered. Basic residues predominate over residues isoleucine 10–glycine 20.

Belongs to the universal ribosomal protein uL18 family. Part of the 50S ribosomal subunit; part of the 5S rRNA/L5/L18/L25 subcomplex. Contacts the 5S and 23S rRNAs.

Functionally, this is one of the proteins that bind and probably mediate the attachment of the 5S RNA into the large ribosomal subunit, where it forms part of the central protuberance. This Streptococcus equi subsp. zooepidemicus (strain H70) protein is Large ribosomal subunit protein uL18.